Consider the following 459-residue polypeptide: ADP-specific phosphofructokinase (459 aa).

The ADPK domain maps to 1-457; the sequence is MMEFLKDFQK…FASYLSLLKR (457 aa). The Mg(2+) site is built by Glu268, Glu298, and Asp441. The active-site Proton acceptor is the Asp441.

The protein belongs to the carbohydrate kinase PfkC family. It depends on Mg(2+) as a cofactor.

Its subcellular location is the cytoplasm. It catalyses the reaction beta-D-fructose 6-phosphate + ADP = beta-D-fructose 1,6-bisphosphate + AMP + H(+). It functions in the pathway carbohydrate degradation; glycolysis. Catalyzes the phosphorylation of fructose 6-phosphate to fructose 1,6-bisphosphate using ADP as the phosphate donor. The polypeptide is ADP-specific phosphofructokinase (Thermococcus litoralis).